The primary structure comprises 411 residues: Arginine deiminase (411 aa).

Cys-399 acts as the Amidino-cysteine intermediate in catalysis.

The protein belongs to the arginine deiminase family.

The protein localises to the cytoplasm. The enzyme catalyses L-arginine + H2O = L-citrulline + NH4(+). The protein operates within amino-acid degradation; L-arginine degradation via ADI pathway; carbamoyl phosphate from L-arginine: step 1/2. The protein is Arginine deiminase of Latilactobacillus sakei subsp. sakei (strain 23K) (Lactobacillus sakei subsp. sakei).